The following is a 188-amino-acid chain: Phosphoribosylglycinamide formyltransferase (188 aa).

Residue 12-14 participates in N(1)-(5-phospho-beta-D-ribosyl)glycinamide binding; that stretch reads GSN. Residues Lys-66, 91-94, and Asn-108 contribute to the (6R)-10-formyltetrahydrofolate site; that span reads MRLI. Residue His-110 is the Proton donor of the active site.

This sequence belongs to the GART family.

It catalyses the reaction N(1)-(5-phospho-beta-D-ribosyl)glycinamide + (6R)-10-formyltetrahydrofolate = N(2)-formyl-N(1)-(5-phospho-beta-D-ribosyl)glycinamide + (6S)-5,6,7,8-tetrahydrofolate + H(+). The protein operates within purine metabolism; IMP biosynthesis via de novo pathway; N(2)-formyl-N(1)-(5-phospho-D-ribosyl)glycinamide from N(1)-(5-phospho-D-ribosyl)glycinamide (10-formyl THF route): step 1/1. In terms of biological role, catalyzes the transfer of a formyl group from 10-formyltetrahydrofolate to 5-phospho-ribosyl-glycinamide (GAR), producing 5-phospho-ribosyl-N-formylglycinamide (FGAR) and tetrahydrofolate. This chain is Phosphoribosylglycinamide formyltransferase, found in Staphylococcus aureus (strain MSSA476).